Consider the following 208-residue polypeptide: Large ribosomal subunit protein uL3 (208 aa).

Residues 123–147 (RHGQSRGPMAHGSRYHRRPGSMGPV) are disordered.

The protein belongs to the universal ribosomal protein uL3 family. As to quaternary structure, part of the 50S ribosomal subunit. Forms a cluster with proteins L14 and L19.

In terms of biological role, one of the primary rRNA binding proteins, it binds directly near the 3'-end of the 23S rRNA, where it nucleates assembly of the 50S subunit. The sequence is that of Large ribosomal subunit protein uL3 from Streptococcus gordonii (strain Challis / ATCC 35105 / BCRC 15272 / CH1 / DL1 / V288).